The following is a 174-amino-acid chain: RNA pyrophosphohydrolase (174 aa).

The Nudix hydrolase domain occupies 6 to 149 (GFRANVGIII…KRDVYRKVMK (144 aa)). Residues 38–59 (GGVDDGESAEEAMYRELYEEVG) carry the Nudix box motif.

The protein belongs to the Nudix hydrolase family. RppH subfamily. A divalent metal cation is required as a cofactor.

Its function is as follows. Accelerates the degradation of transcripts by removing pyrophosphate from the 5'-end of triphosphorylated RNA, leading to a more labile monophosphorylated state that can stimulate subsequent ribonuclease cleavage. The chain is RNA pyrophosphohydrolase from Shewanella oneidensis (strain ATCC 700550 / JCM 31522 / CIP 106686 / LMG 19005 / NCIMB 14063 / MR-1).